The primary structure comprises 263 residues: Type II restriction enzyme TthHB8I (263 aa).

It carries out the reaction Endonucleolytic cleavage of DNA to give specific double-stranded fragments with terminal 5'-phosphates.. In terms of biological role, a P subtype restriction enzyme that recognizes the double-stranded sequence 5'-TCGA-3' and cleaves after T-1. This Thermus thermophilus (strain ATCC 27634 / DSM 579 / HB8) protein is Type II restriction enzyme TthHB8I (tthHB8IR).